Consider the following 587-residue polypeptide: Arginine--tRNA ligase (587 aa).

A 'HIGH' region motif is present at residues 123-133 (ANVAKPLHVGH).

The protein belongs to the class-I aminoacyl-tRNA synthetase family. In terms of assembly, monomer.

It is found in the cytoplasm. It catalyses the reaction tRNA(Arg) + L-arginine + ATP = L-arginyl-tRNA(Arg) + AMP + diphosphate. The polypeptide is Arginine--tRNA ligase (Alkaliphilus oremlandii (strain OhILAs) (Clostridium oremlandii (strain OhILAs))).